A 128-amino-acid chain; its full sequence is Fruiting body differentiation protein 16 (128 aa).

A signal peptide spans 1–19 (MLFSHIVFVALSVFGLVQA).

Functionally, plays a role in the regulation of fruiting body development. The chain is Fruiting body differentiation protein 16 from Flammulina velutipes (Agaricus velutipes).